Reading from the N-terminus, the 540-residue chain is Chaperonin GroEL 3 (540 aa).

ATP contacts are provided by residues 30 to 33 (TLGP), Lys-51, 87 to 91 (DGTTT), Gly-415, 479 to 481 (NAA), and Asp-495.

This sequence belongs to the chaperonin (HSP60) family. In terms of assembly, forms a cylinder of 14 subunits composed of two heptameric rings stacked back-to-back. Interacts with the co-chaperonin GroES.

It is found in the cytoplasm. The enzyme catalyses ATP + H2O + a folded polypeptide = ADP + phosphate + an unfolded polypeptide.. Together with its co-chaperonin GroES, plays an essential role in assisting protein folding. The GroEL-GroES system forms a nano-cage that allows encapsulation of the non-native substrate proteins and provides a physical environment optimized to promote and accelerate protein folding. The sequence is that of Chaperonin GroEL 3 from Burkholderia cenocepacia (strain HI2424).